We begin with the raw amino-acid sequence, 150 residues long: Pyruvoyl-dependent arginine decarboxylase (150 aa).

Ser42 carries the post-translational modification Pyruvic acid (Ser).

It belongs to the PdaD family. Pyruvate serves as cofactor.

The catalysed reaction is L-arginine + H(+) = agmatine + CO2. This is Pyruvoyl-dependent arginine decarboxylase from Methanopyrus kandleri (strain AV19 / DSM 6324 / JCM 9639 / NBRC 100938).